Here is a 258-residue protein sequence, read N- to C-terminus: Tegument protein VP22 (258 aa).

The disordered stretch occupies residues 66–143; sequence VQPAARGRDR…RAPPGANAVA (78 aa). Over residues 77-118 the composition is skewed to low complexity; the sequence is AAAGTTVAAPAAAPARRSSSRASSRPPRAAADPPVLRPATRG. The Nuclear localization signal motif lies at 131–134; the sequence is PRPR. The Nuclear export signal motif lies at 204–216; that stretch reads LDRMLKSAAIRIL. Residues 234–258 form a disordered region; sequence RAQRPAARGSTSGGESRLRGERARP. A compositionally biased stretch (basic and acidic residues) spans 249-258; that stretch reads SRLRGERARP.

Belongs to the alphaherpesvirinae VP22 tegument protein family. Interacts with gE (via C-terminus); this interaction is necessary for the recruitment of VP22 to the Golgi and its packaging into virions. Interacts with gM (via C-terminus). Interacts with VP16; this interaction allows the formation of a tripartite complex composed of VP16, VP22 and UL41/VHS. Interacts with the capsid-binding protein UL16. Interacts with host CGAS. Highly phosphorylated in the host cell. Packaging is selective for underphosphorylated forms.

The protein localises to the virion tegument. It is found in the host cytoplasm. Its subcellular location is the host nucleus. The protein resides in the host Golgi apparatus. Tegument protein that plays different roles during the time course of infection. Participates in both the accumulation of viral mRNAs and viral protein translation at late time of infection. Modulates the RNase activity of the virion host shutoff protein UL41 probably to ensure necessary levels of key cellular mRNAs and proteins. Plays a role in microtubule reorganization that occurs after viral infection by stabilizing microtubule network. Plays a role in the inhibition of host innate immune system by targeting the CGAS enzymatic activity which is the principal cytosolic DNA sensor that detects invading viral DNA. Acts by mediating disruption of liquid-like droplets in which CGAS is activated, thereby preventing CGAS activity. The protein is Tegument protein VP22 of Bovine herpesvirus 1.1 (strain Cooper) (BoHV-1).